Consider the following 192-residue polypeptide: Phosphomevalonate kinase (192 aa).

Residues 17-23 (KRKSGKD) and arginine 141 each bind ATP. Asparagine 170 provides a ligand contact to substrate. Residues histidine 171 and glutamine 180 each contribute to the ATP site.

In terms of assembly, monomer.

The protein localises to the cytoplasm. The protein resides in the cytosol. The enzyme catalyses (R)-5-phosphomevalonate + ATP = (R)-5-diphosphomevalonate + ADP. The protein operates within isoprenoid biosynthesis; isopentenyl diphosphate biosynthesis via mevalonate pathway; isopentenyl diphosphate from (R)-mevalonate: step 2/3. Functionally, catalyzes the reversible ATP-dependent phosphorylation of mevalonate 5-phosphate to produce mevalonate diphosphate and ADP, a key step in the mevalonic acid mediated biosynthesis of isopentenyl diphosphate and other polyisoprenoid metabolites. The sequence is that of Phosphomevalonate kinase (Pmvk) from Mus musculus (Mouse).